The sequence spans 122 residues: Urease subunit beta (122 aa).

The disordered stretch occupies residues 92 to 122 (GLRPEYAGELDGRGHEPTAPNYGEKGQGHFE).

The protein belongs to the urease beta subunit family. In terms of assembly, heterotrimer of UreA (gamma), UreB (beta) and UreC (alpha) subunits. Three heterotrimers associate to form the active enzyme.

Its subcellular location is the cytoplasm. The enzyme catalyses urea + 2 H2O + H(+) = hydrogencarbonate + 2 NH4(+). It participates in nitrogen metabolism; urea degradation; CO(2) and NH(3) from urea (urease route): step 1/1. This is Urease subunit beta from Saccharopolyspora erythraea (strain ATCC 11635 / DSM 40517 / JCM 4748 / NBRC 13426 / NCIMB 8594 / NRRL 2338).